The following is a 158-amino-acid chain: Small ribosomal subunit protein uS7 (158 aa).

Belongs to the universal ribosomal protein uS7 family. As to quaternary structure, part of the 30S ribosomal subunit. Contacts proteins S9 and S11.

Functionally, one of the primary rRNA binding proteins, it binds directly to 16S rRNA where it nucleates assembly of the head domain of the 30S subunit. Is located at the subunit interface close to the decoding center, probably blocks exit of the E-site tRNA. This chain is Small ribosomal subunit protein uS7, found in Bacteroides fragilis (strain YCH46).